The sequence spans 397 residues: Lysophospholipid transporter LplT (397 aa).

Residues 1-17 (MSESVHTNTSLWSKGMK) are Periplasmic-facing. Residues 18–38 (AVIVAQFLSAFGDNALLFATL) form a helical membrane-spanning segment. Over 39-52 (ALLKAQFYPEWSQP) the chain is Cytoplasmic. The helical transmembrane segment at 53-73 (ILQMVFVGAYILFAPFVGQVA) threads the bilayer. Residues 74 to 90 (DSFAKGRVMMFANGLKL) lie on the Periplasmic side of the membrane. The chain crosses the membrane as a helical span at residues 91 to 111 (LGAASICFGINPFLGYTLVGV). At 112 to 144 (GAAAYSPAKYGILGELTTGSKLVKANGLMEAST) the chain is on the cytoplasmic side. A helical transmembrane segment spans residues 145–165 (IAAILLGSVAGGVLADWHVLV). Residue A166 is a topological domain, periplasmic. A helical membrane pass occupies residues 167–187 (LAACALAYGGAVVANIYIPKL). Topologically, residues 188–226 (AAARPGQSWNLINMTRSFLNACTSLWRNGETRFSLVGTS) are cytoplasmic. Residues 227–247 (LFWGAGVTLRFLLVLWVPVAL) form a helical membrane-spanning segment. Residues 248–256 (GITDNATPT) lie on the Periplasmic side of the membrane. Residues 257 to 277 (YLNAMVAIGIVVGAGAAAKLV) form a helical membrane-spanning segment. The Cytoplasmic segment spans residues 278–280 (TLE). The chain crosses the membrane as a helical span at residues 281 to 301 (TVSRCMPAGILIGVVVLIFSL). The Periplasmic portion of the chain corresponds to 302–304 (QHE). A helical transmembrane segment spans residues 305–325 (LLPAYALLMLIGVLGGFFVVP). The Cytoplasmic portion of the chain corresponds to 326-343 (LNALLQERGKKSVGAGNA). The helical transmembrane segment at 344 to 364 (IAVQNLGENSAMLLMLGIYSL) threads the bilayer. Residues 365–366 (AV) lie on the Periplasmic side of the membrane. A helical transmembrane segment spans residues 367-387 (MVGIPVVPIGIGFGTLFALAI). The Cytoplasmic portion of the chain corresponds to 388-397 (TALWIWQRRH).

This sequence belongs to the major facilitator superfamily. LplT (TC 2.A.1.42) family.

Its subcellular location is the cell inner membrane. In terms of biological role, catalyzes the facilitated diffusion of 2-acyl-glycero-3-phosphoethanolamine (2-acyl-GPE) into the cell. This is Lysophospholipid transporter LplT from Escherichia coli O9:H4 (strain HS).